The following is a 249-amino-acid chain: Uridylate kinase (249 aa).

21–24 serves as a coordination point for ATP; it reads KLSG. Position 63 (Gly63) interacts with UMP. ATP contacts are provided by Gly64 and Arg68. Residues Asp84 and 145–152 contribute to the UMP site; that span reads TGNPFVTT. Residues Thr172, Tyr178, and Asp181 each coordinate ATP.

This sequence belongs to the UMP kinase family. As to quaternary structure, homohexamer.

It is found in the cytoplasm. It catalyses the reaction UMP + ATP = UDP + ADP. It functions in the pathway pyrimidine metabolism; CTP biosynthesis via de novo pathway; UDP from UMP (UMPK route): step 1/1. With respect to regulation, inhibited by UTP. Catalyzes the reversible phosphorylation of UMP to UDP. This chain is Uridylate kinase, found in Francisella tularensis subsp. tularensis (strain FSC 198).